The following is a 276-amino-acid chain: Omega-amidase NIT2-A (276 aa).

Residues phenylalanine 4 to leucine 248 form the CN hydrolase domain. Glutamate 43 functions as the Proton acceptor in the catalytic mechanism. Residue lysine 112 is the Proton donor of the active site. Cysteine 153 serves as the catalytic Nucleophile.

The protein belongs to the carbon-nitrogen hydrolase superfamily. NIT1/NIT2 family. Homodimer.

It is found in the cytoplasm. The enzyme catalyses 2-oxoglutaramate + H2O = 2-oxoglutarate + NH4(+). It carries out the reaction 2-oxosuccinamate + H2O = oxaloacetate + NH4(+). In terms of biological role, has omega-amidase activity. The role of omega-amidase is to remove potentially toxic intermediates by converting 2-oxoglutaramate and 2-oxosuccinamate to biologically useful 2-oxoglutarate and oxaloacetate, respectively. The chain is Omega-amidase NIT2-A (nit2a) from Xenopus laevis (African clawed frog).